The following is a 316-amino-acid chain: Acetyl-coenzyme A carboxylase carboxyl transferase subunit alpha (316 aa).

The CoA carboxyltransferase C-terminal domain occupies 39–293 (KLEEKNAQLT…KKHLQANLTN (255 aa)).

Belongs to the AccA family. In terms of assembly, acetyl-CoA carboxylase is a heterohexamer composed of biotin carboxyl carrier protein (AccB), biotin carboxylase (AccC) and two subunits each of ACCase subunit alpha (AccA) and ACCase subunit beta (AccD).

Its subcellular location is the cytoplasm. It carries out the reaction N(6)-carboxybiotinyl-L-lysyl-[protein] + acetyl-CoA = N(6)-biotinyl-L-lysyl-[protein] + malonyl-CoA. The protein operates within lipid metabolism; malonyl-CoA biosynthesis; malonyl-CoA from acetyl-CoA: step 1/1. Its function is as follows. Component of the acetyl coenzyme A carboxylase (ACC) complex. First, biotin carboxylase catalyzes the carboxylation of biotin on its carrier protein (BCCP) and then the CO(2) group is transferred by the carboxyltransferase to acetyl-CoA to form malonyl-CoA. This Coxiella burnetii (strain CbuK_Q154) (Coxiella burnetii (strain Q154)) protein is Acetyl-coenzyme A carboxylase carboxyl transferase subunit alpha.